The following is a 272-amino-acid chain: Aurora kinase (272 aa).

A Protein kinase domain is found at 10–263 (FEIGRLLGRG…LTEALNHPFI (254 aa)). ATP is bound by residues 16 to 24 (LGRGKFGQV) and K39. The Proton acceptor role is filled by D134.

The protein belongs to the protein kinase superfamily. Ser/Thr protein kinase family. Aurora subfamily.

It localises to the nucleus. The protein resides in the cytoplasm. The protein localises to the cytoskeleton. It is found in the spindle. Its subcellular location is the chromosome. It localises to the centromere. The protein resides in the kinetochore. It carries out the reaction L-seryl-[protein] + ATP = O-phospho-L-seryl-[protein] + ADP + H(+). It catalyses the reaction L-threonyl-[protein] + ATP = O-phospho-L-threonyl-[protein] + ADP + H(+). Its function is as follows. Component of the chromosomal passenger complex (CPC), a complex that acts as a key regulator of chromosome segregation and cytokinesis. Has a role in error-correction of aberrent kinetochore-microtubule attachments to ensure that sister kinetochores become bioriented and connect to opposite poles by promoting spindle assembly checkpoint signaling. This is Aurora kinase (IPL1) from Encephalitozoon cuniculi (strain GB-M1) (Microsporidian parasite).